Reading from the N-terminus, the 493-residue chain is UDP-N-acetylmuramoyl-L-alanyl-D-glutamate--2,6-diaminopimelate ligase (493 aa).

UDP-N-acetyl-alpha-D-muramoyl-L-alanyl-D-glutamate-binding residues include L30 and S32. 117–123 contributes to the ATP binding site; it reads GTNGKTT. Residues N158, 159–160, S186, Q192, and R194 each bind UDP-N-acetyl-alpha-D-muramoyl-L-alanyl-D-glutamate; that span reads TT. Residue K226 is modified to N6-carboxylysine. Meso-2,6-diaminopimelate-binding positions include R388, 412 to 415, G463, and E467; that span reads DNPR. Positions 412-415 match the Meso-diaminopimelate recognition motif motif; it reads DNPR.

Belongs to the MurCDEF family. MurE subfamily. It depends on Mg(2+) as a cofactor. Post-translationally, carboxylation is probably crucial for Mg(2+) binding and, consequently, for the gamma-phosphate positioning of ATP.

It localises to the cytoplasm. The enzyme catalyses UDP-N-acetyl-alpha-D-muramoyl-L-alanyl-D-glutamate + meso-2,6-diaminopimelate + ATP = UDP-N-acetyl-alpha-D-muramoyl-L-alanyl-gamma-D-glutamyl-meso-2,6-diaminopimelate + ADP + phosphate + H(+). The protein operates within cell wall biogenesis; peptidoglycan biosynthesis. Catalyzes the addition of meso-diaminopimelic acid to the nucleotide precursor UDP-N-acetylmuramoyl-L-alanyl-D-glutamate (UMAG) in the biosynthesis of bacterial cell-wall peptidoglycan. This Vibrio parahaemolyticus serotype O3:K6 (strain RIMD 2210633) protein is UDP-N-acetylmuramoyl-L-alanyl-D-glutamate--2,6-diaminopimelate ligase.